Here is a 129-residue protein sequence, read N- to C-terminus: MRPLKPGAPLPALFLLALALSPHGAHGRPRGRRGARVTDKEPKPLLFLPAAGAGRTPSGSRSAEIFPRDSNLKDKFIKHFTGPVTFSPECSKHFHRLYYNTRECSTPAYYKRCARLLTRLAVSPLCSQT.

A signal peptide spans 1–27 (MRPLKPGAPLPALFLLALALSPHGAHG). The segment at 24–63 (GAHGRPRGRRGARVTDKEPKPLLFLPAAGAGRTPSGSRSA) is disordered. The segment covering 25–35 (AHGRPRGRRGA) has biased composition (basic residues). Intrachain disulfides connect Cys-90–Cys-126 and Cys-104–Cys-113.

The protein belongs to the ALKAL family. Widely expressed with highest levels in thyroid and moderate levels in stomach, trachea, small intestine, prostate and brain.

It localises to the secreted. The protein localises to the cell membrane. Functionally, cytokine that acts as a physiological ligand for receptor tyrosine kinase LTK, leading to its activation. Monomeric ALKAL1 binds to LTK, leading to LTK homodimerization and activation. In contrast to ALKAL2, does not act as a potent physiological ligand for ALK. This is ALK and LTK ligand 1 from Homo sapiens (Human).